The following is a 190-amino-acid chain: Putative histone H1.6 (190 aa).

Positions 1-29 are disordered; the sequence is MSDVAVAETPAVKTPTKAPKANATKVPKV. Position 2 is an N-acetylserine (S2). Positions 9–29 are enriched in low complexity; the sequence is TPAVKTPTKAPKANATKVPKV. In terms of domain architecture, H15 spans 34–110; sequence AHPPFINMVT…GATGRFRVAE (77 aa). Residues 141-190 form a disordered region; sequence KKTGDKVKKAKSPKKIAKPAAKKATKSPSKKVAPKKAAAKPAKKTAALKA. Residues 148–183 are compositionally biased toward basic residues; the sequence is KKAKSPKKIAKPAAKKATKSPSKKVAPKKAAAKPAK.

Belongs to the histone H1/H5 family.

It is found in the nucleus. It localises to the chromosome. Functionally, histones H1 are necessary for the condensation of nucleosome chains into higher-order structures. In Caenorhabditis elegans, this protein is Putative histone H1.6 (hil-6).